Here is a 304-residue protein sequence, read N- to C-terminus: Meiotically up-regulated gene 86 protein (304 aa).

The segment covering Met1–Ser12 has biased composition (low complexity). Residues Met1 to Phe23 form a disordered region. 6 consecutive transmembrane segments (helical) span residues Pro93–Val113, Met123–Glu143, Phe150–Ile170, Ala188–Val208, Leu212–Phe232, and Val247–Leu267.

It belongs to the acetate uptake transporter (AceTr) (TC 2.A.96) family.

It localises to the endoplasmic reticulum membrane. The protein localises to the golgi apparatus. The protein resides in the golgi stack membrane. It is found in the vacuole membrane. Its function is as follows. Has a role in meiosis. The protein is Meiotically up-regulated gene 86 protein (mug86) of Schizosaccharomyces pombe (strain 972 / ATCC 24843) (Fission yeast).